The following is a 595-amino-acid chain: MRSHYCGELSEAHLDQSVTLCGWVNRRRDHGGVIFIDLRDREGLIQLVFDPEYSPESFRHAEQIRSEYVLQVKGRVQHRPEGTENPDLKTGQVEVLGQELILLNASETPPFPVDEKLEVGEDIRLRYRYIDLRRPESLQRLRFRSAIIRQLRKFLDERGFLDIDTPILTQSTPEGARDFLVPSRTHPGQFFALPQSPQLFKQLLMVAGVDRYYQVVRCFRDEDLRADRQPEFTQLDIEASFLHEETLMALMEEMFKELFATVLEVPLHTPFVRMPYAEALACFGLDKPDLRIPLRLVEVGDLMKTVDFKVFAQPAQDRDGRVAALRLPGGGKLSRKEIEEYTQFVAIYGAKGLAYIKVVERSRGREGLQSPILKFLPDEVIGAMLERTEAENGDIVFFGADKASIVNESLGALRVKLGHDHGLVEHGWSPLWVIDFPMFEWDEDDHRWHALHHPFTSPKEEDLSLLEQNPGACRSRAYDLVLNGTEVGGGSIRISQSQVQSQVFRLLGIGDEEAQDKFGFLLDALKYGCPPHGGIAFGLDRLVMLMTGSASIREVIPFPKTQTAACPLTGAPGQVAEAQLRELGIGVRRLASDKV.

E174 lines the L-aspartate pocket. Positions 198–201 are aspartate; it reads QLFK. Residue R220 coordinates L-aspartate. ATP contacts are provided by residues 220–222 and Q229; that span reads RDE. L-aspartate is bound at residue H452. ATP is bound at residue E486. R493 lines the L-aspartate pocket. Position 538-541 (538-541) interacts with ATP; sequence GLDR.

The protein belongs to the class-II aminoacyl-tRNA synthetase family. Type 1 subfamily. In terms of assembly, homodimer.

Its subcellular location is the cytoplasm. The catalysed reaction is tRNA(Asx) + L-aspartate + ATP = L-aspartyl-tRNA(Asx) + AMP + diphosphate. In terms of biological role, aspartyl-tRNA synthetase with relaxed tRNA specificity since it is able to aspartylate not only its cognate tRNA(Asp) but also tRNA(Asn). Reaction proceeds in two steps: L-aspartate is first activated by ATP to form Asp-AMP and then transferred to the acceptor end of tRNA(Asp/Asn). The sequence is that of Aspartate--tRNA(Asp/Asn) ligase from Nitrosococcus oceani (strain ATCC 19707 / BCRC 17464 / JCM 30415 / NCIMB 11848 / C-107).